Consider the following 216-residue polypeptide: Holliday junction branch migration complex subunit RuvA (216 aa).

Residues 1 to 64 (MISFIKGVLI…EDAQQLYGFK (64 aa)) form a domain I region. The segment at 65 to 143 (SKVDKKVFQE…KMANEIYAQT (79 aa)) is domain II. Residues 144-163 (SGTTTTSQDSQAQQAPTSAV) are flexible linker. The interval 164–216 (LANSIFNESVDALLALGYKQKDAEKMSRSAMGDATTAAEVIRKALQGSIRSKR) is domain III.

It belongs to the RuvA family. In terms of assembly, homotetramer. Forms an RuvA(8)-RuvB(12)-Holliday junction (HJ) complex. HJ DNA is sandwiched between 2 RuvA tetramers; dsDNA enters through RuvA and exits via RuvB. An RuvB hexamer assembles on each DNA strand where it exits the tetramer. Each RuvB hexamer is contacted by two RuvA subunits (via domain III) on 2 adjacent RuvB subunits; this complex drives branch migration. In the full resolvosome a probable DNA-RuvA(4)-RuvB(12)-RuvC(2) complex forms which resolves the HJ.

It localises to the cytoplasm. Functionally, the RuvA-RuvB-RuvC complex processes Holliday junction (HJ) DNA during genetic recombination and DNA repair, while the RuvA-RuvB complex plays an important role in the rescue of blocked DNA replication forks via replication fork reversal (RFR). RuvA specifically binds to HJ cruciform DNA, conferring on it an open structure. The RuvB hexamer acts as an ATP-dependent pump, pulling dsDNA into and through the RuvAB complex. HJ branch migration allows RuvC to scan DNA until it finds its consensus sequence, where it cleaves and resolves the cruciform DNA. In Francisella tularensis subsp. novicida (strain U112), this protein is Holliday junction branch migration complex subunit RuvA.